The primary structure comprises 254 residues: Allene oxide cyclase 1, chloroplastic (254 aa).

Residues Met-1–Arg-78 constitute a chloroplast transit peptide. Positions Ser-44–Thr-56 are enriched in low complexity. Positions Ser-44–Pro-79 are disordered. Positions Arg-65–Pro-77 are enriched in polar residues.

Belongs to the allene oxide cyclase family. In terms of tissue distribution, highly expressed in fully developed leaves.

It is found in the plastid. The protein resides in the chloroplast. It carries out the reaction (9Z,13S,15Z)-12,13-epoxyoctadeca-9,11,15-trienoate = (9S,13S,15Z)-12-oxophyto-10,15-dienoate. Involved in the production of 12-oxo-phytodienoic acid (OPDA), a precursor of jasmonic acid. The protein is Allene oxide cyclase 1, chloroplastic (AOC1) of Arabidopsis thaliana (Mouse-ear cress).